The primary structure comprises 201 residues: MICOS complex subunit MIC27 (201 aa).

Residues 1 to 31 (MTQDKPIVETISNAGEQVTNVFGQFWQLVTS) constitute a mitochondrion transit peptide. At 32–117 (KNTTNNGDSK…KCNAYLTEEW (86 aa)) the chain is on the cytoplasmic side. The helical transmembrane segment at 118–138 (TALPKAAAITVGGMAGFVLGL) threads the bilayer. The Mitochondrial intermembrane segment spans residues 139–145 (KRGPVGR). A helical membrane pass occupies residues 146 to 166 (LLTTTIGLATMAAFCYPIEAV). Topologically, residues 167 to 201 (DVAKTGRAHAEQTWYSFQESPTPSAIVKTNLSPPK) are cytoplasmic.

It belongs to the apolipoprotein O/MICOS complex subunit Mic27 family. Component of the mitochondrial contact site and cristae organizing system (MICOS) complex.

The protein resides in the mitochondrion outer membrane. Its function is as follows. Sustains mitochondrial morphology probably through maintaining cristae morphology. May act as a component of the MICOS complex, a large protein complex of the mitochondria. The sequence is that of MICOS complex subunit MIC27 from Caenorhabditis elegans.